A 367-amino-acid polypeptide reads, in one-letter code: UDP-N-acetylglucosamine--N-acetylmuramyl-(pentapeptide) pyrophosphoryl-undecaprenol N-acetylglucosamine transferase (367 aa).

UDP-N-acetyl-alpha-D-glucosamine contacts are provided by residues 10–12 (TGG), asparagine 124, serine 196, and glutamine 300.

It belongs to the glycosyltransferase 28 family. MurG subfamily.

The protein resides in the cell membrane. The catalysed reaction is di-trans,octa-cis-undecaprenyl diphospho-N-acetyl-alpha-D-muramoyl-L-alanyl-D-glutamyl-meso-2,6-diaminopimeloyl-D-alanyl-D-alanine + UDP-N-acetyl-alpha-D-glucosamine = di-trans,octa-cis-undecaprenyl diphospho-[N-acetyl-alpha-D-glucosaminyl-(1-&gt;4)]-N-acetyl-alpha-D-muramoyl-L-alanyl-D-glutamyl-meso-2,6-diaminopimeloyl-D-alanyl-D-alanine + UDP + H(+). It functions in the pathway cell wall biogenesis; peptidoglycan biosynthesis. Its function is as follows. Cell wall formation. Catalyzes the transfer of a GlcNAc subunit on undecaprenyl-pyrophosphoryl-MurNAc-pentapeptide (lipid intermediate I) to form undecaprenyl-pyrophosphoryl-MurNAc-(pentapeptide)GlcNAc (lipid intermediate II). The polypeptide is UDP-N-acetylglucosamine--N-acetylmuramyl-(pentapeptide) pyrophosphoryl-undecaprenol N-acetylglucosamine transferase (Natranaerobius thermophilus (strain ATCC BAA-1301 / DSM 18059 / JW/NM-WN-LF)).